We begin with the raw amino-acid sequence, 192 residues long: Probable GTP-binding protein EngB (192 aa).

In terms of domain architecture, EngB-type G spans 22–192 (NLPQIVIVGR…QVLSIFEKYA (171 aa)). Residues 30–37 (GRSNVGKS), 57–61 (GKTRG), 75–78 (DLPG), 142–145 (TKAD), and 173–175 (FSA) each bind GTP. Residues Ser37 and Thr59 each coordinate Mg(2+).

The protein belongs to the TRAFAC class TrmE-Era-EngA-EngB-Septin-like GTPase superfamily. EngB GTPase family. Mg(2+) is required as a cofactor.

In terms of biological role, necessary for normal cell division and for the maintenance of normal septation. This chain is Probable GTP-binding protein EngB, found in Thermoanaerobacter pseudethanolicus (strain ATCC 33223 / 39E) (Clostridium thermohydrosulfuricum).